We begin with the raw amino-acid sequence, 336 residues long: Holliday junction branch migration complex subunit RuvB (336 aa).

Residues 1 to 181 (MDRIVEIEKV…FGMDFRLQFY (181 aa)) are large ATPase domain (RuvB-L). ATP-binding positions include leucine 20, arginine 21, glycine 62, lysine 65, threonine 66, threonine 67, 128–130 (EDF), arginine 171, tyrosine 181, and arginine 218. Threonine 66 provides a ligand contact to Mg(2+). The tract at residues 182–252 (TSSELSRIVQ…RAKEGLNALG (71 aa)) is small ATPAse domain (RuvB-S). The segment at 255–336 (SLGFDEMDIR…KIDIEKGLFE (82 aa)) is head domain (RuvB-H). The DNA site is built by arginine 309 and arginine 314.

The protein belongs to the RuvB family. Homohexamer. Forms an RuvA(8)-RuvB(12)-Holliday junction (HJ) complex. HJ DNA is sandwiched between 2 RuvA tetramers; dsDNA enters through RuvA and exits via RuvB. An RuvB hexamer assembles on each DNA strand where it exits the tetramer. Each RuvB hexamer is contacted by two RuvA subunits (via domain III) on 2 adjacent RuvB subunits; this complex drives branch migration. In the full resolvosome a probable DNA-RuvA(4)-RuvB(12)-RuvC(2) complex forms which resolves the HJ.

It localises to the cytoplasm. The catalysed reaction is ATP + H2O = ADP + phosphate + H(+). Its function is as follows. The RuvA-RuvB-RuvC complex processes Holliday junction (HJ) DNA during genetic recombination and DNA repair, while the RuvA-RuvB complex plays an important role in the rescue of blocked DNA replication forks via replication fork reversal (RFR). RuvA specifically binds to HJ cruciform DNA, conferring on it an open structure. The RuvB hexamer acts as an ATP-dependent pump, pulling dsDNA into and through the RuvAB complex. RuvB forms 2 homohexamers on either side of HJ DNA bound by 1 or 2 RuvA tetramers; 4 subunits per hexamer contact DNA at a time. Coordinated motions by a converter formed by DNA-disengaged RuvB subunits stimulates ATP hydrolysis and nucleotide exchange. Immobilization of the converter enables RuvB to convert the ATP-contained energy into a lever motion, pulling 2 nucleotides of DNA out of the RuvA tetramer per ATP hydrolyzed, thus driving DNA branch migration. The RuvB motors rotate together with the DNA substrate, which together with the progressing nucleotide cycle form the mechanistic basis for DNA recombination by continuous HJ branch migration. Branch migration allows RuvC to scan DNA until it finds its consensus sequence, where it cleaves and resolves cruciform DNA. The chain is Holliday junction branch migration complex subunit RuvB from Campylobacter concisus (strain 13826).